The sequence spans 513 residues: Na(+)/H(+) antiporter NhaB (513 aa).

Helical transmembrane passes span 21-41, 64-84, 88-108, 119-139, 143-163, 202-222, 243-263, 299-318, 322-344, 350-370, 389-409, and 477-497; these read ICII…SPFV, QPGG…AHHV, IMAN…IYFM, LLIV…SATF, FLDA…FYGV, LLMH…VGEP, LPVS…LEHF, MGIQ…LHLA, IIGL…HAIG, PMPF…IVDL, LALF…VFVG, and MALP…EFLL.

This sequence belongs to the NhaB Na(+)/H(+) (TC 2.A.34) antiporter family.

Its subcellular location is the cell inner membrane. It catalyses the reaction 2 Na(+)(in) + 3 H(+)(out) = 2 Na(+)(out) + 3 H(+)(in). Its function is as follows. Na(+)/H(+) antiporter that extrudes sodium in exchange for external protons. The sequence is that of Na(+)/H(+) antiporter NhaB from Actinobacillus pleuropneumoniae serotype 3 (strain JL03).